The chain runs to 571 residues: FAD-binding monooxygenase VdtE (571 aa).

FAD contacts are provided by residues 44–47 (VWYW), 56–57 (DS), and Y62. 54–56 (RVD) provides a ligand contact to NADP(+). NADP(+) contacts are provided by residues 187–193 (TGASAVQ) and 210–211 (RT).

It belongs to the FAD-binding monooxygenase family. FAD serves as cofactor.

It catalyses the reaction 9,10-dihydroxy-7-methoxy-3-(2-oxopropyl)-1H-benzo[g]isochromen-1-one + NADPH + O2 + H(+) = methyl 2-[(3S)-9,10-dihydroxy-7-methoxy-1-oxo-1H,3H,4H-naphtho[2,3-c]pyran-3-yl]acetate + NADP(+) + H2O. It carries out the reaction (3S)-9,10-dihydroxy-7-methoxy-3-(2-oxopropyl)-1H,3H,4H-naphtho[2,3-c]pyran-1-one + NADPH + O2 + H(+) = semiviriditoxin + NADP(+) + H2O. The protein operates within secondary metabolite biosynthesis. In terms of biological role, FAD-binding monooxygenase; part of the gene cluster that mediates the biosynthesis of viriditoxin, one of the 'classical' secondary metabolites produced by fungi and that has antibacterial activity. The first step is performed by the polyketide synthase VdtA which condenses one acetyl-CoA and 6 malonyl-CoA units to form the heptaketide monomer backbone of viriditoxin. The product of VdtA is then O-methylated on C7 by the O-methyltransferase VdtC. The O-methyl group is important for the stereoselective coupling of the monomers at the final step of viriditoxin biosynthesis. The short-chain dehydrogenase/reductase VdtF then acts as a stereospecific reductase converting the pyrone to dihydropyrone via the reduction of the C3-C4 double bond. The FAD-binding monooxygenase VdtE then converts the ketone group into a methyl-ester group to yield semi-viriditoxin. Finally, the laccase VdtB is involved in dimerization of 2 semi-viriditoxin molecules to yield the final viriditoxin. VdtB is responsible for the regioselective 6,6'-coupling of semi-viriditoxin, which yields (M)-viriditoxin and (P)-viriditoxin at a ratio of 1:2. The non-catalytic carboxylesterase-like protein VdtD affects the stereochemistical outcome of the coupling. The highly reducing polyketide synthase VdtX is not involved in viriditoxin synthesis, but might possibly play a role in the production of additional metabolites not identified yet. The chain is FAD-binding monooxygenase VdtE from Byssochlamys spectabilis (Paecilomyces variotii).